Reading from the N-terminus, the 485-residue chain is Glutamyl-tRNA(Gln) amidotransferase subunit A (485 aa).

Catalysis depends on charge relay system residues lysine 79 and serine 154. Catalysis depends on serine 178, which acts as the Acyl-ester intermediate.

The protein belongs to the amidase family. GatA subfamily. As to quaternary structure, heterotrimer of A, B and C subunits.

The catalysed reaction is L-glutamyl-tRNA(Gln) + L-glutamine + ATP + H2O = L-glutaminyl-tRNA(Gln) + L-glutamate + ADP + phosphate + H(+). Allows the formation of correctly charged Gln-tRNA(Gln) through the transamidation of misacylated Glu-tRNA(Gln) in organisms which lack glutaminyl-tRNA synthetase. The reaction takes place in the presence of glutamine and ATP through an activated gamma-phospho-Glu-tRNA(Gln). This Clostridium novyi (strain NT) protein is Glutamyl-tRNA(Gln) amidotransferase subunit A.